The chain runs to 1647 residues: Putative RNA exonuclease pqe-1 (1647 aa).

Disordered stretches follow at residues methionine 1–asparagine 199, glutamine 274–proline 393, methionine 515–isoleucine 619, and glutamine 641–arginine 665. Composition is skewed to low complexity over residues glycine 30–serine 64 and threonine 99–alanine 131. The segment covering serine 143–asparagine 170 has biased composition (polar residues). Composition is skewed to low complexity over residues glutamine 274–glutamine 297 and methionine 515–glutamine 526. A compositionally biased stretch (pro residues) spans asparagine 527 to proline 540. Residues proline 541–proline 555 show a composition bias toward low complexity. Residues serine 592–proline 601 are compositionally biased toward basic and acidic residues. A compositionally biased stretch (low complexity) spans serine 650–alanine 664. A coiled-coil region spans residues serine 686–glutamate 726. A compositionally biased stretch (polar residues) spans alanine 736–serine 756. Residues alanine 736–glutamate 1174 are disordered. Over residues threonine 761–serine 772 the composition is skewed to low complexity. Acidic residues predominate over residues threonine 783–glutamate 793. The segment covering arginine 822–serine 833 has biased composition (basic and acidic residues). The span at aspartate 878 to methionine 905 shows a compositional bias: acidic residues. Over residues threonine 977–cysteine 992 the composition is skewed to low complexity. A compositionally biased stretch (basic and acidic residues) spans lysine 1018–glutamine 1031. A compositionally biased stretch (polar residues) spans serine 1038–serine 1054. Basic and acidic residues-rich tracts occupy residues alanine 1076–lysine 1088 and asparagine 1139–glutamate 1174. Residues glutamate 1142 to lysine 1187 are a coiled coil. One can recognise an Exonuclease domain in the interval arginine 1477 to serine 1637.

The protein belongs to the REXO1/REXO3 family. In terms of tissue distribution, expressed in the excretory canal, vulval cells, the intestine and in head and tail neurons including ASH, RIC and AIZ neurons.

It localises to the nucleus. Its function is as follows. Putative RNA exonuclease which protects neurons from the toxic effects of expanded poly-Q disease proteins. It is unknown whether this is via participation in the pathogenic mechanism underlying poly-Q-induced neurodegeneration or if it is by acting as a genetic modifier of the age of onset or progression of neurodegeneration. Regulates gene expression in neurons. This is Putative RNA exonuclease pqe-1 from Caenorhabditis elegans.